The primary structure comprises 348 residues: MSIEIRNITKSFGSFQALKGIDLTIGSGELVALLGPSGCGKTTLLRIIAGLEAADSGQILLHGEDTTHRHVRERRVGFVFQHYALFRHMSVFENIAFGLRVRPRGQRPPEAEIRRRVQELLELVQLDWLADRHPGQLSGGQRQRIALARALAVEPKVLLLDEPFGALDAKVRKDLRRWLRRLHDGLHITSVFVTHDQEEALEVADRVVVLNAGQIEQVGSADEVYDHPATPFVCQFIGDVNLFHGRVHGGRALIGETVIELPDIAESDTEKALFFARPHEIEIGRGTGIGAVVRAIRRRGNAVRVELERKDGRGAVEAELSREAFGRHAIKHGDEVVIQPSKIRMFQP.

Residues 3–237 (IEIRNITKSF…PATPFVCQFI (235 aa)) enclose the ABC transporter domain. Residue 35-42 (GPSGCGKT) participates in ATP binding.

The protein belongs to the ABC transporter superfamily. Sulfate/tungstate importer (TC 3.A.1.6) family. In terms of assembly, the complex is composed of two ATP-binding proteins (CysA), two transmembrane proteins (CysT and CysW) and a solute-binding protein (CysP).

It localises to the cell inner membrane. The catalysed reaction is sulfate(out) + ATP + H2O = sulfate(in) + ADP + phosphate + H(+). It carries out the reaction thiosulfate(out) + ATP + H2O = thiosulfate(in) + ADP + phosphate + H(+). Functionally, part of the ABC transporter complex CysAWTP involved in sulfate/thiosulfate import. Responsible for energy coupling to the transport system. The sequence is that of Sulfate/thiosulfate import ATP-binding protein CysA from Methylococcus capsulatus (strain ATCC 33009 / NCIMB 11132 / Bath).